A 1920-amino-acid chain; its full sequence is rRNA biogenesis protein RRP5 (1920 aa).

Residues 1 to 65 form a disordered region; it reads MVVPQKKFAN…GTSLSKKERE (65 aa). 15 S1 motif domains span residues 128 to 210, 226 to 291, 314 to 384, 400 to 473, 490 to 557, 577 to 646, 661 to 733, 753 to 822, 866 to 930, 958 to 1031, 1054 to 1129, 1153 to 1224, 1260 to 1334, 1369 to 1438, and 1459 to 1529; these read GMKL…LSLR, GMVF…LSSD, GMMV…LTLS, GDIF…GTLK, GMVT…VTYK, GLVT…LSFM, GSIV…LSSK, NSVV…LSLK, GSLI…LSLR, EVHQ…LLLD, GSVV…LSVK, GQCV…LVQR, GDIL…LSLR, DMGV…VTLK, and GDMI…LGMK. 2 disordered regions span residues 1535–1555 and 1605–1652; these read NGDD…ECDP and TDFD…LEHH. Positions 1620-1652 are enriched in basic and acidic residues; the sequence is NKDEKSKRREKQKDKEEREKKIQAAEGRLLEHH. 6 HAT repeats span residues 1651–1683, 1685–1722, 1726–1758, 1759–1791, 1828–1860, and 1862–1897; these read HHAP…FMLS, ADIE…LENE, PPEE…YERT, EQYK…SSLK, GVAD…QEIR, and GEDD…YEKS.

Highly expressed in flowers and at lower levels in roots, leaves, stems and siliques.

Its subcellular location is the nucleus. The protein resides in the nucleolus. Involved in the biogenesis of ribosomal RNA (rRNA). Required for the formation of 5.8S rRNA. Required for normal development of female gametophytes. In Arabidopsis thaliana (Mouse-ear cress), this protein is rRNA biogenesis protein RRP5.